The chain runs to 476 residues: Angiotensinogen (476 aa).

The signal sequence occupies residues 1–24; that stretch reads MAPAGMSLRATILCLLAWAGLAAG. Asparagine 38, asparagine 161, asparagine 295, and asparagine 319 each carry an N-linked (GlcNAc...) asparagine glycan. A disulfide bond links cysteine 42 and cysteine 162.

This sequence belongs to the serpin family. In response to low blood pressure, the enzyme renin/REN cleaves angiotensinogen to produce angiotensin-1. Angiotensin-1 is a substrate of ACE (angiotensin converting enzyme) that removes a dipeptide to yield the physiologically active peptide angiotensin-2. Angiotensin-1 and angiotensin-2 can be further processed to generate angiotensin-3, angiotensin-4. Angiotensin 1-9 is cleaved from angiotensin-1 by ACE2 and can be further processed by ACE to produce angiotensin 1-7, angiotensin 1-5 and angiotensin 1-4. Angiotensin 1-7 has also been proposed to be cleaved from angiotensin-2 by ACE2 or from angiotensin-1 by MME (neprilysin). Post-translationally, the disulfide bond is labile. Angiotensinogen is present in the circulation in a near 40:60 ratio with the oxidized disulfide-bonded form, which preferentially interacts with receptor-bound renin.

Its subcellular location is the secreted. In terms of biological role, essential component of the renin-angiotensin system (RAS), a potent regulator of blood pressure, body fluid and electrolyte homeostasis. Acts directly on vascular smooth muscle as a potent vasoconstrictor, affects cardiac contractility and heart rate through its action on the sympathetic nervous system, and alters renal sodium and water absorption through its ability to stimulate the zona glomerulosa cells of the adrenal cortex to synthesize and secrete aldosterone. Acts by binding to angiotensin receptors AGTR1 and AGTR2. Also binds the DEAR/FBXW7-AS1 receptor. Functionally, stimulates aldosterone release. Its function is as follows. Is a ligand for the G-protein coupled receptor MAS1. Has vasodilator and antidiuretic effects. Has an antithrombotic effect that involves MAS1-mediated release of nitric oxide from platelets. In Gorilla gorilla gorilla (Western lowland gorilla), this protein is Angiotensinogen (AGT).